Consider the following 258-residue polypeptide: Pimeloyl-[acyl-carrier protein] methyl ester esterase (258 aa).

In terms of domain architecture, AB hydrolase-1 spans 17-241; that stretch reads VYLIHGWGAN…KAAHAPFLSH (225 aa). Residues Trp-23, 83 to 84, and 145 to 149 contribute to the substrate site; these read SL and FLQLQ. Catalysis depends on Ser-83, which acts as the Nucleophile. Residues Asp-207 and His-235 contribute to the active site. His-235 is a substrate binding site.

It belongs to the AB hydrolase superfamily. Carboxylesterase BioH family. Monomer.

It localises to the cytoplasm. It catalyses the reaction 6-carboxyhexanoyl-[ACP] methyl ester + H2O = 6-carboxyhexanoyl-[ACP] + methanol + H(+). It functions in the pathway cofactor biosynthesis; biotin biosynthesis. Its function is as follows. The physiological role of BioH is to remove the methyl group introduced by BioC when the pimeloyl moiety is complete. It allows to synthesize pimeloyl-ACP via the fatty acid synthetic pathway through the hydrolysis of the ester bonds of pimeloyl-ACP esters. The chain is Pimeloyl-[acyl-carrier protein] methyl ester esterase from Neisseria meningitidis serogroup B (strain ATCC BAA-335 / MC58).